The sequence spans 380 residues: Cytochrome b (380 aa).

4 consecutive transmembrane segments (helical) span residues 34 to 54 (FGSL…LLAM), 78 to 99 (WLIR…YLHI), 114 to 134 (WNTG…GYVL), and 179 to 199 (FFAL…IHLT). H84 and H98 together coordinate heme b. The heme b site is built by H183 and H197. An a ubiquinone-binding site is contributed by H202. 4 helical membrane-spanning segments follow: residues 227–247 (LKDI…ALFS), 289–309 (LGGV…PFLH), 321–341 (ISQL…WVGS), and 348–368 (FIII…VLFP).

It belongs to the cytochrome b family. In terms of assembly, the cytochrome bc1 complex contains 11 subunits: 3 respiratory subunits (MT-CYB, CYC1 and UQCRFS1), 2 core proteins (UQCRC1 and UQCRC2) and 6 low-molecular weight proteins (UQCRH/QCR6, UQCRB/QCR7, UQCRQ/QCR8, UQCR10/QCR9, UQCR11/QCR10 and a cleavage product of UQCRFS1). This cytochrome bc1 complex then forms a dimer. Heme b is required as a cofactor.

The protein localises to the mitochondrion inner membrane. Component of the ubiquinol-cytochrome c reductase complex (complex III or cytochrome b-c1 complex) that is part of the mitochondrial respiratory chain. The b-c1 complex mediates electron transfer from ubiquinol to cytochrome c. Contributes to the generation of a proton gradient across the mitochondrial membrane that is then used for ATP synthesis. The polypeptide is Cytochrome b (MT-CYB) (Pelecanoides georgicus (South Georgia diving petrel)).